Consider the following 1073-residue polypeptide: ATP-dependent helicase/deoxyribonuclease subunit B (1073 aa).

It belongs to the helicase family. AddB/RexB type 2 subfamily. In terms of assembly, heterodimer of AddA and RexB. Mg(2+) serves as cofactor.

Its function is as follows. The heterodimer acts as both an ATP-dependent DNA helicase and an ATP-dependent, dual-direction single-stranded exonuclease. Recognizes the chi site generating a DNA molecule suitable for the initiation of homologous recombination. This subunit has 5' -&gt; 3' nuclease activity but not helicase activity. The chain is ATP-dependent helicase/deoxyribonuclease subunit B from Streptococcus equi subsp. zooepidemicus (strain H70).